A 420-amino-acid chain; its full sequence is Dynein axonemal assembly factor 4 (420 aa).

A CS domain is found at L3–S87. The segment at D7–S103 is mediates interaction with ESR1 and STUB1. 3 TPR repeats span residues P290 to M323, P324 to P357, and M366 to N399.

Interacts with ZMYND10. Interacts with STUB1. Interacts with ESR1 and ESR2. Interacts with DNAAF2. Interacts with CCT3, CCT4, CCT5 and CCT8. Interacts with DNAAF6/PIH1D3.

It localises to the nucleus. Its subcellular location is the cytoplasm. It is found in the cell projection. The protein resides in the neuron projection. The protein localises to the dynein axonemal particle. Its function is as follows. Involved in neuronal migration during development of the cerebral neocortex. May regulate the stability and proteasomal degradation of the estrogen receptors that play an important role in neuronal differentiation, survival and plasticity. Axonemal dynein assembly factor required for ciliary motility. This chain is Dynein axonemal assembly factor 4, found in Pongo pygmaeus (Bornean orangutan).